Reading from the N-terminus, the 171-residue chain is Cytochrome c oxidase subunit 4 isoform 2, mitochondrial (171 aa).

The transit peptide at 1-28 (MLPRAAWSLVLRKGGGGRRGMHSSEGTT) directs the protein to the mitochondrion. A disordered region spans residues 13-32 (KGGGGRRGMHSSEGTTRGGG). Topologically, residues 29 to 100 (RGGGKMSPYT…TFAEMNRRSN (72 aa)) are mitochondrial matrix. The chain crosses the membrane as a helical span at residues 101–126 (EWKTVMGCVFFFIGFAALVIWWQRVY). Residues 127–171 (VFPPKPITLTDERKAQQLQRMLDMKVNPVQGLASRWDYEKKQWKK) are Mitochondrial intermembrane-facing.

This sequence belongs to the cytochrome c oxidase IV family. Component of the cytochrome c oxidase (complex IV, CIV), a multisubunit enzyme composed of 14 subunits. The complex is composed of a catalytic core of 3 subunits MT-CO1, MT-CO2 and MT-CO3, encoded in the mitochondrial DNA, and 11 supernumerary subunits COX4I1 (or COX4I2), COX5A, COX5B, COX6A1 (or COX6A2), COX6B1 (or COX6B2), COX6C, COX7A2 (or COX7A1), COX7B, COX7C, COX8A and NDUFA4, which are encoded in the nuclear genome. The complex exists as a monomer or a dimer and forms supercomplexes (SCs) in the inner mitochondrial membrane with NADH-ubiquinone oxidoreductase (complex I, CI) and ubiquinol-cytochrome c oxidoreductase (cytochrome b-c1 complex, complex III, CIII), resulting in different assemblies (supercomplex SCI(1)III(2)IV(1) and megacomplex MCI(2)III(2)IV(2)). Highly expressed in lung.

The protein localises to the mitochondrion inner membrane. It functions in the pathway energy metabolism; oxidative phosphorylation. Functionally, component of the cytochrome c oxidase, the last enzyme in the mitochondrial electron transport chain which drives oxidative phosphorylation. The respiratory chain contains 3 multisubunit complexes succinate dehydrogenase (complex II, CII), ubiquinol-cytochrome c oxidoreductase (cytochrome b-c1 complex, complex III, CIII) and cytochrome c oxidase (complex IV, CIV), that cooperate to transfer electrons derived from NADH and succinate to molecular oxygen, creating an electrochemical gradient over the inner membrane that drives transmembrane transport and the ATP synthase. Cytochrome c oxidase is the component of the respiratory chain that catalyzes the reduction of oxygen to water. Electrons originating from reduced cytochrome c in the intermembrane space (IMS) are transferred via the dinuclear copper A center (CU(A)) of subunit 2 and heme A of subunit 1 to the active site in subunit 1, a binuclear center (BNC) formed by heme A3 and copper B (CU(B)). The BNC reduces molecular oxygen to 2 water molecules using 4 electrons from cytochrome c in the IMS and 4 protons from the mitochondrial matrix. The polypeptide is Cytochrome c oxidase subunit 4 isoform 2, mitochondrial (Homo sapiens (Human)).